A 105-amino-acid polypeptide reads, in one-letter code: MSCGEPHETDCSEILDHLYEFLDKEMPDSDCVKFEHHFEECSPCLEKYGLEQAVKKLVKRCCGQDDVPGDLRAKVMGRLDLIRSGQSVPEHDVAAAPSSSAPQES.

Zn(2+)-binding residues include cysteine 11, histidine 37, cysteine 41, and cysteine 44. Cysteine 11 and cysteine 44 are joined by a disulfide. The segment at 33–47 (KFEHHFEECSPCLEK) is contributes to redox-sensitivity. Residues 86–105 (QSVPEHDVAAAPSSSAPQES) form a disordered region. Residues 94-105 (AAAPSSSAPQES) show a composition bias toward low complexity.

Belongs to the zinc-associated anti-sigma factor (ZAS) superfamily. In terms of assembly, interacts with cognate sigma factor SigR under reducing but not oxiding conditions. Treatment with the thiol-oxidzing agent diamide inhibits the interaction, while incubation with thioredoxin (trxA) stimulates the interaction. Zn(2+) is required as a cofactor. In terms of processing, under oxidizing conditions up to 3 disulfide bonds are formed. A single disulfide bond inhibits binding to SigR. Cys-11 forms a disulfide bond with either Cys-44 (the major bind) or Cys-41 (a minor bond).

In terms of biological role, a redox-regulated anti-sigma factor for extracytoplasmic function (ECF) sigma factor SigR, and a key sensor of disulfide stress. Holds SigR, its cognate ECF sigma factor, in an inactive form, inhibiting its sigma activity under reducing but not oxidizing conditions; oxidation and reduction of the anti-sigma factor is reversible. Mycothiol (MSH) is competent for reduction of RsrA, allowing it to bind to SigR. In conjunction with its cognate sigma factor SigR may sense the intracellular level of reduced MSH. Probably releases SigR during oxidative stress. In Streptomyces coelicolor (strain ATCC BAA-471 / A3(2) / M145), this protein is Anti-sigma factor RsrA (rsrA).